Here is an 872-residue protein sequence, read N- to C-terminus: Probable cation-transporting P-type ATPase (872 aa).

Residues 1-41 (MNKWTGLSAAAVLESRAQHGANLIPTKKLTPFWLLFLEQFK) lie on the Cytoplasmic side of the membrane. The chain crosses the membrane as a helical span at residues 42–62 (SLVVILLLVATILSLVVAIIS). Residues 63–79 (GVNANWLFDHNLVIEWT) lie on the Extracellular side of the membrane. A helical membrane pass occupies residues 80-100 (QPFVILITVLANSLIGSIQEF). Over 101–237 (KAQKSAHTLK…TKLSPLQQKL (137 aa)) the chain is Cytoplasmic. A helical membrane pass occupies residues 238-257 (EKVGKWFSWFGLGLFVVVFL). Topologically, residues 258–275 (VQLGLLGFHNFSANWSIA) are extracellular. The helical transmembrane segment at 276–293 (LIGAIALVVAIIPEGLVT) threads the bilayer. The Cytoplasmic portion of the chain corresponds to 294–642 (FINVIFALSV…EQGRKTFLTC (349 aa)). The 4-aspartylphosphate intermediate role is filled by aspartate 331. 2 residues coordinate Mg(2+): aspartate 587 and aspartate 591. Residues 643-662 (KRVLFNLFLTSIAGTIVVLL) form a helical membrane-spanning segment. Topologically, residues 663-685 (GLFVLGEVFREQLSKANHNFQVF) are extracellular. The helical transmembrane segment at 686–706 (TPTQLLIINLFVHGFPAVALA) threads the bilayer. The Cytoplasmic portion of the chain corresponds to 707 to 724 (IQPVQEKLMLKPFSTKNL). Residues 725-747 (FYNRGGFDLIWQSLLLSFLTLLF) form a helical membrane-spanning segment. The Extracellular segment spans residues 748 to 768 (YSLGMVYAINDPELGKSGDLI). A helical membrane pass occupies residues 769–788 (NRAGATCGFMVLGGSAALNS). Over 789 to 801 (LNLMVDRPLVATN) the chain is Cytoplasmic. The helical transmembrane segment at 802 to 824 (PKHYGIVWLGALSSIFVFLLIIF) threads the bilayer. The Extracellular portion of the chain corresponds to 825–842 (INPLGLVFSTLKDLTAHP). A helical membrane pass occupies residues 843 to 863 (VLIGYSFGGVLLYMTINEVVK). The Cytoplasmic segment spans residues 864-872 (LIRLSYGSV).

Belongs to the cation transport ATPase (P-type) (TC 3.A.3) family. Type II subfamily.

The protein resides in the cell membrane. It carries out the reaction ATP + H2O = ADP + phosphate + H(+). Could mediate calcium influx. This is Probable cation-transporting P-type ATPase (pacL) from Mycoplasma pneumoniae (strain ATCC 29342 / M129 / Subtype 1) (Mycoplasmoides pneumoniae).